Here is a 136-residue protein sequence, read N- to C-terminus: uncharacterized protein (136 aa).

This is an uncharacterized protein from Ictaluridae (bullhead catfishes).